The sequence spans 597 residues: Leukocyte immunoglobulin-like receptor subfamily B member 2 (597 aa).

The signal sequence occupies residues 1 to 21 (MTPIVTVLICLGLSLGPRTRV). Topologically, residues 22 to 460 (QTGTIPKPTL…QSGLGRHLGV (439 aa)) are extracellular. 4 consecutive Ig-like C2-type domains span residues 27–110 (PKPT…SELS), 111–229 (DPLV…SLSV), 230–318 (QPGP…ILIT), and 330–419 (QPGP…LVVS). Cystine bridges form between C49–C98, C144–C196, C156–C166, and C245–C296. N280, N301, and N340 each carry an N-linked (GlcNAc...) asparagine glycan. C345 and C396 are disulfide-bonded. The disordered stretch occupies residues 417–451 (VVSGPSMGSSPPPTGPISTPGPEDQPLTPTGSDPQ). Residues 461-481 (VIGILVAVVLLLLLLLLLFLI) form a helical membrane-spanning segment. At 482-597 (LRHRRQGKHW…PSIYATLAIH (116 aa)) the chain is on the cytoplasmic side. The tract at residues 491 to 523 (WTSTQRKADFQHPAGAVGPEPTDRGLQWRSSPA) is disordered. Short sequence motifs (ITIM motif) lie at residues 530–535 (NLYAAV), 559–564 (VTYAQL), and 589–594 (SIYATL). Residues 537–597 (DTQPEDGVEM…PSIYATLAIH (61 aa)) are disordered.

As to quaternary structure, binds PTPN6 when phosphorylated. Binds FCGR1A. Interacts with peptide-bound HLA-G-B2M; this interaction is direct. Interacts with peptide-bound HLA-F-B2M; this interaction is direct. Phosphorylated on tyrosine residues. Dephosphorylated by PTPN6. As to expression, expressed in monocytes and at lower levels in myeloid and plasmacytoid dendritic cells. Expressed in tolerogenic IL10-producing dendritic cells. Expressed in myeloid-derived suppressor cells during pregnancy. Detected at low levels in natural killer (NK) cells. Expressed in B cells.

Its subcellular location is the cell membrane. Its function is as follows. Receptor for class I MHC antigens. Recognizes a broad spectrum of HLA-A, HLA-B, HLA-C, HLA-G and HLA-F alleles. Involved in the down-regulation of the immune response and the development of tolerance. Recognizes HLA-G in complex with B2M/beta-2 microglobulin and a nonamer self-peptide (peptide-bound HLA-G-B2M) triggering differentiation of type 1 regulatory T cells and myeloid-derived suppressor cells, both of which actively maintain maternal-fetal tolerance. Competes with CD8A for binding to class I MHC antigens. Inhibits FCGR1A-mediated phosphorylation of cellular proteins and mobilization of intracellular calcium ions. The protein is Leukocyte immunoglobulin-like receptor subfamily B member 2 of Homo sapiens (Human).